A 224-amino-acid chain; its full sequence is Phosphoribosylformylglycinamidine synthase subunit PurQ (224 aa).

Residues 2–224 (KVTILQFPGT…IKMLQGFLRA (223 aa)) enclose the Glutamine amidotransferase type-1 domain. Cysteine 86 (nucleophile) is an active-site residue. Active-site residues include histidine 200 and glutamate 202.

In terms of assembly, part of the FGAM synthase complex composed of 1 PurL, 1 PurQ and 2 PurS subunits.

It is found in the cytoplasm. The enzyme catalyses N(2)-formyl-N(1)-(5-phospho-beta-D-ribosyl)glycinamide + L-glutamine + ATP + H2O = 2-formamido-N(1)-(5-O-phospho-beta-D-ribosyl)acetamidine + L-glutamate + ADP + phosphate + H(+). It carries out the reaction L-glutamine + H2O = L-glutamate + NH4(+). It functions in the pathway purine metabolism; IMP biosynthesis via de novo pathway; 5-amino-1-(5-phospho-D-ribosyl)imidazole from N(2)-formyl-N(1)-(5-phospho-D-ribosyl)glycinamide: step 1/2. Functionally, part of the phosphoribosylformylglycinamidine synthase complex involved in the purines biosynthetic pathway. Catalyzes the ATP-dependent conversion of formylglycinamide ribonucleotide (FGAR) and glutamine to yield formylglycinamidine ribonucleotide (FGAM) and glutamate. The FGAM synthase complex is composed of three subunits. PurQ produces an ammonia molecule by converting glutamine to glutamate. PurL transfers the ammonia molecule to FGAR to form FGAM in an ATP-dependent manner. PurS interacts with PurQ and PurL and is thought to assist in the transfer of the ammonia molecule from PurQ to PurL. This Sulfurimonas denitrificans (strain ATCC 33889 / DSM 1251) (Thiomicrospira denitrificans (strain ATCC 33889 / DSM 1251)) protein is Phosphoribosylformylglycinamidine synthase subunit PurQ.